The primary structure comprises 147 residues: 3-hydroxyacyl-[acyl-carrier-protein] dehydratase FabZ (147 aa).

The active site involves H46.

The protein belongs to the thioester dehydratase family. FabZ subfamily.

It localises to the cytoplasm. It catalyses the reaction a (3R)-hydroxyacyl-[ACP] = a (2E)-enoyl-[ACP] + H2O. Functionally, involved in unsaturated fatty acids biosynthesis. Catalyzes the dehydration of short chain beta-hydroxyacyl-ACPs and long chain saturated and unsaturated beta-hydroxyacyl-ACPs. This Syntrophobacter fumaroxidans (strain DSM 10017 / MPOB) protein is 3-hydroxyacyl-[acyl-carrier-protein] dehydratase FabZ.